We begin with the raw amino-acid sequence, 121 residues long: Griffithsin (121 aa).

One can recognise a Jacalin-type lectin domain in the interval 1-120 (SLTHRKFGGS…LDSLDIYYEQ (120 aa)).

In terms of biological role, mixed specificity lectin with anti-HIV activity. Binds to HIV envelope glycoproteins, including exterior membrane glycoprotein gp120, and inhibits viral entry into cells. Binding to gp120 is dependent on gp120 being glycosylated, and is inhibited by mannose, glucose and N-acetylglucosamine. The polypeptide is Griffithsin (Griffithsia sp. (strain Q66D336) (Red alga)).